A 347-amino-acid polypeptide reads, in one-letter code: Probable RNA methyltransferase Lcho_2507 (347 aa).

Glu-89 serves as the catalytic Proton acceptor. The Radical SAM core domain maps to 92–318 (LLPRDGLCVS…TKLRQSAGQD (227 aa)). Residues Cys-99 and Cys-323 are joined by a disulfide bond. Residues Cys-106, Cys-110, and Cys-113 each coordinate [4Fe-4S] cluster. S-adenosyl-L-methionine-binding positions include 151–152 (GE), Ser-181, 204–206 (SLH), and Asn-280. Cys-323 (S-methylcysteine intermediate) is an active-site residue.

It belongs to the radical SAM superfamily. RlmN family. Requires [4Fe-4S] cluster as cofactor.

It is found in the cytoplasm. The chain is Probable RNA methyltransferase Lcho_2507 from Leptothrix cholodnii (strain ATCC 51168 / LMG 8142 / SP-6) (Leptothrix discophora (strain SP-6)).